The primary structure comprises 213 residues: Cytochrome b6 (213 aa).

The chain crosses the membrane as a helical span at residues 30-50 (IFFCLGGLTLLCFIVQCLTGI). Cys-33 is a heme c binding site. Heme b-binding residues include His-84 and His-98. A run of 3 helical transmembrane segments spans residues 88-108 (CQLMILLVFLHMLRVYYTGAF), 114-134 (LNWVAGCFLLVLSLALAFTGY), and 184-204 (LHVMILPAVAIIFLVAHFIMI). His-185 and His-200 together coordinate heme b.

This sequence belongs to the cytochrome b family. PetB subfamily. As to quaternary structure, the subunits of the cytochrome bc complex are a Rieske Fe-S protein (PetC), cytochrome b6 (PetB), subunit IV (PetD), and a diheme cytochrome c (PetX). Heme b serves as cofactor. Requires heme c as cofactor.

The protein localises to the cell membrane. Component of the cytochrome bc complex which donates electrons to the photosynthetic reaction center. The sequence is that of Cytochrome b6 from Heliomicrobium gestii (Heliobacterium gestii).